Here is a 59-residue protein sequence, read N- to C-terminus: Potassium channel toxin alpha-KTx 1.1 (59 aa).

The N-terminal stretch at 1 to 22 (MKILSVLLLALIICSIVGWSEA) is a signal peptide. Position 23 is a pyrrolidone carboxylic acid (Q23). 3 disulfides stabilise this stretch: C29–C50, C35–C55, and C39–C57. Residues 48-55 (GKCMNKKC) are interaction with Ca(2+)-activated K(+) channels.

It belongs to the short scorpion toxin superfamily. Potassium channel inhibitor family. Alpha-KTx 01 subfamily. In terms of tissue distribution, expressed by the venom gland.

The protein localises to the secreted. In terms of biological role, this toxin inhibits numerous potassium channels: shaker (Ki=227 nM), Kv1.2/KCNA2 (nanomolar range), Kv1.3/KCNA3 (nanomolar range), Kv1.5/KCNA5 (Kd&gt;100 nM), Kv1.6/KCNA6 (Ki=22 nM), KCa1.1/KCNMA1 (IC(50)=5.9 nM). It blocks channel activity by a simple bimolecular inhibition process. It also shows a weak interaction with nicotinic acetylcholine receptors (nAChR), suggesting it may weakly inhibit it. It also exhibits pH-specific antimicrobial activities against bacteria (B.subtilis, E.coli and S.aureus) and the fungus C.albicans. This is Potassium channel toxin alpha-KTx 1.1 from Leiurus hebraeus (Hebrew deathstalker scorpion).